Here is a 315-residue protein sequence, read N- to C-terminus: Nucleotide-binding protein CGSHiEE_06315 (315 aa).

Glycine 8 to serine 15 contacts ATP. Position 56–59 (aspartate 56–asparagine 59) interacts with GTP.

It belongs to the RapZ-like family.

Displays ATPase and GTPase activities. This is Nucleotide-binding protein CGSHiEE_06315 from Haemophilus influenzae (strain PittEE).